A 276-amino-acid chain; its full sequence is Large ribosomal subunit protein uL2 (276 aa).

The segment at Met-225–Lys-276 is disordered. Residues Lys-257 to Lys-276 are compositionally biased toward basic residues.

Belongs to the universal ribosomal protein uL2 family. As to quaternary structure, part of the 50S ribosomal subunit. Forms a bridge to the 30S subunit in the 70S ribosome.

Its function is as follows. One of the primary rRNA binding proteins. Required for association of the 30S and 50S subunits to form the 70S ribosome, for tRNA binding and peptide bond formation. It has been suggested to have peptidyltransferase activity; this is somewhat controversial. Makes several contacts with the 16S rRNA in the 70S ribosome. The polypeptide is Large ribosomal subunit protein uL2 (Desulfitobacterium hafniense (strain DSM 10664 / DCB-2)).